The sequence spans 45 residues: Cytochrome b559 subunit beta (45 aa).

The helical transmembrane segment at Trp20–Ala36 threads the bilayer. Heme is bound at residue His24.

Belongs to the PsbE/PsbF family. Heterodimer of an alpha subunit and a beta subunit. PSII is composed of 1 copy each of membrane proteins PsbA, PsbB, PsbC, PsbD, PsbE, PsbF, PsbH, PsbI, PsbJ, PsbK, PsbL, PsbM, PsbT, PsbX, PsbY, PsbZ, Psb30/Ycf12, peripheral proteins PsbO, CyanoQ (PsbQ), PsbU, PsbV and a large number of cofactors. It forms dimeric complexes. Heme b is required as a cofactor.

It is found in the cellular thylakoid membrane. In terms of biological role, this b-type cytochrome is tightly associated with the reaction center of photosystem II (PSII). PSII is a light-driven water:plastoquinone oxidoreductase that uses light energy to abstract electrons from H(2)O, generating O(2) and a proton gradient subsequently used for ATP formation. It consists of a core antenna complex that captures photons, and an electron transfer chain that converts photonic excitation into a charge separation. This Nostoc punctiforme (strain ATCC 29133 / PCC 73102) protein is Cytochrome b559 subunit beta.